Here is a 380-residue protein sequence, read N- to C-terminus: Chorismate synthase (380 aa).

Residue R49 coordinates NADP(+). FMN-binding positions include G288, 303–307, and R330; that span reads KPPSS.

The protein belongs to the chorismate synthase family. The cofactor is FMNH2.

The catalysed reaction is 5-O-(1-carboxyvinyl)-3-phosphoshikimate = chorismate + phosphate. The protein operates within metabolic intermediate biosynthesis; chorismate biosynthesis; chorismate from D-erythrose 4-phosphate and phosphoenolpyruvate: step 7/7. Functionally, catalyzes the anti-1,4-elimination of the C-3 phosphate and the C-6 proR hydrogen from 5-enolpyruvylshikimate-3-phosphate (EPSP) to yield chorismate, which is the branch point compound that serves as the starting substrate for the three terminal pathways of aromatic amino acid biosynthesis. This reaction introduces a second double bond into the aromatic ring system. The chain is Chorismate synthase from Aeropyrum pernix (strain ATCC 700893 / DSM 11879 / JCM 9820 / NBRC 100138 / K1).